Here is a 928-residue protein sequence, read N- to C-terminus: Heme/hemopexin-binding protein (928 aa).

A signal peptide spans 1–21; that stretch reads MYKLNVISLIILTTCSGAAYA. A run of 10 repeats spans residues 101–106, 149–154, 155–160, 161–166, 167–172, 205–210, 279–284, 410–415, 635–640, and 674–679. The 6 X 6 AA approximate repeats stretch occupies residues 101–679; sequence NGKVYLANPN…RLGMNGKVSM (579 aa). The segment at 149-172 is 4 X 6 AA approximate tandem repeats; it reads KDRQVLKEGLVLKDGQVVKEGQVI.

The protein resides in the secreted. Its function is as follows. Binds heme/hemopexin complexes. The polypeptide is Heme/hemopexin-binding protein (hxuA) (Haemophilus influenzae).